A 182-amino-acid polypeptide reads, in one-letter code: CD-NTase-associated protein 15 (182 aa).

Transmembrane regions (helical) follow at residues 11–31 and 33–53; these read ITGW…CTVW and IGWI…TIGY.

The protein belongs to the CBASS Cap15 membrane effector family. As to quaternary structure, the beta barrel domain oligomerizes; in the presence of cyclic nucleotides (probably 3',2'-cGAMP) higher-level oligomers occur.

It is found in the cell membrane. Effector protein of a CBASS antivirus system. CBASS (cyclic oligonucleotide-based antiphage signaling system) provides immunity against bacteriophage. The CD-NTase protein (CdnE) synthesizes cyclic nucleotides in response to infection; these serve as specific second messenger signals. The signals activate a diverse range of effectors, leading to bacterial cell death and thus abortive phage infection. This system triggers membrane disruption without lysis. A type I-B CBASS system. Binds cyclic nucleotide second messenger 3',2'-cGAMP, probably oligomerizing, and induces cell membrane shrinkage and rupture, leading to cell death. Its function is as follows. Protects S.aureus against phage infection. When the CBASS operon (cdnE-cap15) is introduced in S.aureus strain RN4220 there is strong protection against lytic DNA phages 80alpha-vir and phi-NM1-gamma-6 but little to no protection against phages phi-NM4-gamma-4 or phi-12-gamma-3. The polypeptide is CD-NTase-associated protein 15 (Staphylococcus schleiferi).